Reading from the N-terminus, the 133-residue chain is Protein PsiE homolog (133 aa).

4 helical membrane passes run 13 to 33, 55 to 75, 81 to 101, and 105 to 125; these read LQWILNIALIILSIVLSIFLI, VESIIVYFLYFEFIALIIKYF, FPLRYFIYIGITALIRLIIVS, and PMETLLYAGAILILVIALYIS.

Belongs to the PsiE family.

It localises to the cell membrane. In Bacillus cereus (strain ATCC 10987 / NRS 248), this protein is Protein PsiE homolog.